The following is a 313-amino-acid chain: tRNA dimethylallyltransferase (313 aa).

11-18 is a binding site for ATP; the sequence is GPTAGGKT. Residue 13–18 participates in substrate binding; it reads TAGGKT. Interaction with substrate tRNA stretches follow at residues 36 to 39, 160 to 164, and 243 to 248; these read DSAL, QRIGR, and RCVGYR.

Belongs to the IPP transferase family. Monomer. Mg(2+) serves as cofactor.

The enzyme catalyses adenosine(37) in tRNA + dimethylallyl diphosphate = N(6)-dimethylallyladenosine(37) in tRNA + diphosphate. Its function is as follows. Catalyzes the transfer of a dimethylallyl group onto the adenine at position 37 in tRNAs that read codons beginning with uridine, leading to the formation of N6-(dimethylallyl)adenosine (i(6)A). The chain is tRNA dimethylallyltransferase from Neisseria meningitidis serogroup A / serotype 4A (strain DSM 15465 / Z2491).